The chain runs to 2214 residues: Multifunctional protein URA2 (2214 aa).

The residue at position 2 (A2) is an N-acetylalanine. The tract at residues 2-400 is GATase (Glutamine amidotransferase); the sequence is ATIAPTAPIT…PGPRDTEFLF (399 aa). 3 residues coordinate L-glutamine: S64, G273, and G275. In terms of domain architecture, Glutamine amidotransferase type-1 spans 228–413; the sequence is RILAIDVGMK…IQAVKEFKYT (186 aa). The active-site Nucleophile; for GATase activity is C302. L-glutamine-binding residues include L303, Q306, N344, G346, and F347. Catalysis depends on for GATase activity residues H386 and E388. The linker stretch occupies residues 401–440; sequence DVFIQAVKEFKYTQVLKPIAFPGGLLEDNVKAHPRIEAKK. The tract at residues 440-980 is CPSase A; it reads KVLVLGSGGL…DSHDLSFDDH (541 aa). The tract at residues 440 to 1482 is CPSase (Carbamoyl phosphate synthase); sequence KVLVLGSGGL…TNVKCAKLLI (1043 aa). Positions 558, 598, 604, 605, 635, 637, 642, 668, 669, 670, 711, and 725 each coordinate ATP. ATP-grasp domains are found at residues 562-754 and 1099-1290; these read SNAI…KLGL and SRML…KAIM. Q711, E725, and N727 together coordinate Mg(2+). Mn(2+) contacts are provided by Q711, E725, and N727. The tract at residues 981-1482 is CPSase B; that stretch reads GVMVLGSGVY…TNVKCAKLLI (502 aa). 10 residues coordinate ATP: R1135, K1174, I1176, E1181, G1206, V1207, H1208, S1209, Q1249, and E1261. Q1249, E1261, and N1263 together coordinate Mg(2+). Q1249, E1261, and N1263 together coordinate Mn(2+). Residues 1356–1508 enclose the MGS-like domain; it reads FKLPKKNILL…QTSHRTITLP (153 aa). Residues 1483–1492 are linker; it reads EAISRNITLD. The segment at 1493-1821 is defective DHOase domain; the sequence is VSERDAQTSH…YNGETLVLSG (329 aa). A linker region spans residues 1822 to 1909; sequence ELVSPGAKGK…NLIRSNNPFR (88 aa). K1853 is covalently cross-linked (Glycyl lysine isopeptide (Lys-Gly) (interchain with G-Cter in ubiquitin)). At S1857 the chain carries Phosphoserine; by PKA. The ATCase (Aspartate transcarbamylase) stretch occupies residues 1910 to 2214; sequence GRHILSIKQF…LLAMVMGVDM (305 aa). Positions 1962 and 1963 each coordinate carbamoyl phosphate. K1990 serves as a coordination point for L-aspartate. Residues R2011, H2039, and Q2042 each coordinate carbamoyl phosphate. 2 residues coordinate L-aspartate: R2072 and R2134. Carbamoyl phosphate is bound by residues L2173 and P2174.

In the N-terminal section; belongs to the CarA family. The protein in the 2nd section; belongs to the CarB family. This sequence in the 3rd section; belongs to the metallo-dependent hydrolases superfamily. DHOase family. CAD subfamily. It in the C-terminal section; belongs to the aspartate/ornithine carbamoyltransferase superfamily. ATCase family. The cofactor is Mg(2+). Requires Mn(2+) as cofactor.

It localises to the cytoplasm. It carries out the reaction hydrogencarbonate + L-glutamine + 2 ATP + H2O = carbamoyl phosphate + L-glutamate + 2 ADP + phosphate + 2 H(+). It catalyses the reaction L-glutamine + H2O = L-glutamate + NH4(+). The enzyme catalyses hydrogencarbonate + NH4(+) + 2 ATP = carbamoyl phosphate + 2 ADP + phosphate + 2 H(+). The catalysed reaction is carbamoyl phosphate + L-aspartate = N-carbamoyl-L-aspartate + phosphate + H(+). Its pathway is pyrimidine metabolism; UMP biosynthesis via de novo pathway; (S)-dihydroorotate from bicarbonate: step 1/3. The protein operates within pyrimidine metabolism; UMP biosynthesis via de novo pathway; (S)-dihydroorotate from bicarbonate: step 2/3. Both CPSase and ATCase activities are feedback inhibited by the end product UTP. Multifunctional protein that encodes the first 2 enzymatic activities of the de novo pyrimidine pathway: carbamoylphosphate synthetase (CPSase; EC 6.3.5.5) and aspartate transcarbamylase (ATCase; EC 2.1.3.2). The CPSase-function is accomplished in 2 steps, by a glutamine-dependent amidotransferase activity (GATase) that binds and cleaves glutamine to produce ammonia, followed by an ammonium-dependent carbamoyl phosphate synthetase, which reacts with the ammonia, hydrogencarbonate and ATP to form carbamoyl phosphate. The endogenously produced carbamoyl phosphate is sequestered and channeled to the ATCase active site. ATCase then catalyzes the formation of carbamoyl-L-aspartate from L-aspartate and carbamoyl phosphate. In Saccharomyces cerevisiae (strain ATCC 204508 / S288c) (Baker's yeast), this protein is Multifunctional protein URA2 (URA2).